The primary structure comprises 198 residues: NADH-quinone oxidoreductase subunit C (198 aa).

This sequence belongs to the complex I 30 kDa subunit family. NDH-1 is composed of 14 different subunits. Subunits NuoB, C, D, E, F, and G constitute the peripheral sector of the complex.

Its subcellular location is the cell inner membrane. It carries out the reaction a quinone + NADH + 5 H(+)(in) = a quinol + NAD(+) + 4 H(+)(out). Its function is as follows. NDH-1 shuttles electrons from NADH, via FMN and iron-sulfur (Fe-S) centers, to quinones in the respiratory chain. The immediate electron acceptor for the enzyme in this species is believed to be ubiquinone. Couples the redox reaction to proton translocation (for every two electrons transferred, four hydrogen ions are translocated across the cytoplasmic membrane), and thus conserves the redox energy in a proton gradient. The sequence is that of NADH-quinone oxidoreductase subunit C from Chromobacterium violaceum (strain ATCC 12472 / DSM 30191 / JCM 1249 / CCUG 213 / NBRC 12614 / NCIMB 9131 / NCTC 9757 / MK).